The following is a 391-amino-acid chain: Multidrug resistance protein MdtL (391 aa).

12 helical membrane passes run 4–24 (FLIC…MYLV), 42–62 (IAFS…GKVA), 69–89 (PVAI…SLAE), 93–113 (LFLA…VVAF), 131–151 (LLNG…HLIM), 158–178 (SLFW…LFIL), 203–222 (FFLS…LTFV), 245–265 (ALTA…LGIF), 269–289 (TLMI…AVSP), 293–313 (VSLF…GVAM), 331–351 (LGIA…VVGI), and 356–376 (MLIG…MFVA).

Belongs to the major facilitator superfamily. DHA1 family. MdtL (TC 2.A.1.2.22) subfamily.

Its subcellular location is the cell inner membrane. Functionally, confers resistance to chloramphenicol. This chain is Multidrug resistance protein MdtL, found in Escherichia coli (strain 55989 / EAEC).